The chain runs to 681 residues: Amine oxidase [copper-containing] alpha 3, peroxisomal (681 aa).

Position 323–334 (323–334 (YLDCGDFGCGQC)) interacts with substrate. The Proton acceptor role is filled by Asp325. Cys344 and Cys370 are disulfide-bonded. Residue 410–415 (VGNYDY) coordinates substrate. Tyr413 functions as the Schiff-base intermediate with substrate; via topaquinone in the catalytic mechanism. 2',4',5'-topaquinone is present on Tyr413. Cu cation contacts are provided by His470 and His472. Residues Asp481, Asp621, and Ile622 each contribute to the Mn(2+) site. Residue His632 participates in Cu cation binding.

This sequence belongs to the copper/topaquinone oxidase family. In terms of processing, topaquinone (TPQ) is generated by copper-dependent autoxidation of a specific tyrosyl residue. As to expression, mostly expressed in stems, and, at lower levels, in flowers and leaves. Mainly detectable in stipules, hypocotyls and roots.

The protein resides in the peroxisome. The enzyme catalyses a primary methyl amine + O2 + H2O = an aldehyde + H2O2 + NH4(+). It functions in the pathway amine and polyamine degradation; putrescine degradation. Its function is as follows. Copper amine oxidase that can use putrescine and spermidine as substrates. Involved in putrescine catabolism in peroxisomes. The polypeptide is Amine oxidase [copper-containing] alpha 3, peroxisomal (Arabidopsis thaliana (Mouse-ear cress)).